The sequence spans 252 residues: Proteasome subunit alpha type-7-1B (252 aa).

The protein belongs to the peptidase T1A family. The 26S proteasome consists of a 20S proteasome core and two 19S regulatory subunits. The 20S proteasome core is composed of 28 subunits that are arranged in four stacked rings, resulting in a barrel-shaped structure. The two end rings are each formed by seven alpha subunits, and the two central rings are each formed by seven beta subunits. The catalytic chamber with the active sites is on the inside of the barrel. As to expression, testis specific.

The protein localises to the cytoplasm. It is found in the nucleus. Its function is as follows. The proteasome is a multicatalytic proteinase complex which is characterized by its ability to cleave peptides with Arg, Phe, Tyr, Leu, and Glu adjacent to the leaving group at neutral or slightly basic pH. The proteasome has an ATP-dependent proteolytic activity. This Drosophila melanogaster (Fruit fly) protein is Proteasome subunit alpha type-7-1B (Prosalpha4T2).